The primary structure comprises 448 residues: MIILTLNCGSSSVKYQVYNWTERAVIAVGVVERVTQAGSVITHEVHGRENHVRESPCPTHTEAVQLIISTLTDAHVGVISDMSLIKAVGHRVLHAADRFVKSVVVTPDVLETFRSVQDLGPLHNPANIRGIEAAQAVIPSVPHCAIMDTAWHQTMPEASFMYAVPRQWYEEYAVRRYGFHGTSFLYTAKRASVILKKRAEDTNIIIAHIGNGASMCCVKNGVSFDTSMGITPLEGLIMGTRCGDCDPALAFYIMRKTGMSVSDIDTTLNKQSGLLGITGKYVDRRDVCAAMKNGDALARLAFDMEVHRIRKYFGAYVAALGKQPDALVFTAGVGEMCCDVRAAACAGLEHLGIRLDARKNELARTRNAETEISTDDSPVRILVIPTDEELVMTEDTYALMQGTYDVHTRFTYSFQDPTYVNKARAAGLKRDLEKNPALATIVVPRLDT.

Asn7 serves as a coordination point for Mg(2+). Position 14 (Lys14) interacts with ATP. Arg91 is a binding site for substrate. Catalysis depends on Asp148, which acts as the Proton donor/acceptor. Residues 208–212 (HIGNG) and 283–285 (DRR) each bind ATP. Position 388 (Glu388) interacts with Mg(2+).

Belongs to the acetokinase family. In terms of assembly, homodimer. Mg(2+) serves as cofactor. Mn(2+) is required as a cofactor.

It is found in the cytoplasm. The catalysed reaction is acetate + ATP = acetyl phosphate + ADP. It functions in the pathway metabolic intermediate biosynthesis; acetyl-CoA biosynthesis; acetyl-CoA from acetate: step 1/2. Catalyzes the formation of acetyl phosphate from acetate and ATP. Can also catalyze the reverse reaction. The sequence is that of Acetate kinase from Treponema pallidum (strain Nichols).